Reading from the N-terminus, the 155-residue chain is Ribosome maturation factor RimP (155 aa).

The protein belongs to the RimP family.

It is found in the cytoplasm. Its function is as follows. Required for maturation of 30S ribosomal subunits. This is Ribosome maturation factor RimP from Prochlorococcus marinus (strain AS9601).